Reading from the N-terminus, the 251-residue chain is Malonyl-[acyl-carrier protein] O-methyltransferase (251 aa).

This sequence belongs to the methyltransferase superfamily.

The enzyme catalyses malonyl-[ACP] + S-adenosyl-L-methionine = malonyl-[ACP] methyl ester + S-adenosyl-L-homocysteine. The protein operates within cofactor biosynthesis; biotin biosynthesis. Functionally, converts the free carboxyl group of a malonyl-thioester to its methyl ester by transfer of a methyl group from S-adenosyl-L-methionine (SAM). It allows to synthesize pimeloyl-ACP via the fatty acid synthetic pathway. This chain is Malonyl-[acyl-carrier protein] O-methyltransferase, found in Enterobacter lignolyticus (strain SCF1).